The sequence spans 174 residues: Small ribosomal subunit protein uS7c (174 aa).

The protein belongs to the universal ribosomal protein uS7 family. As to quaternary structure, part of the 30S ribosomal subunit.

The protein localises to the plastid. It localises to the chloroplast. One of the primary rRNA binding proteins, it binds directly to 16S rRNA where it nucleates assembly of the head domain of the 30S subunit. This Stigeoclonium helveticum (Green alga) protein is Small ribosomal subunit protein uS7c (rps7).